The chain runs to 289 residues: ATP synthase gamma chain (289 aa).

It belongs to the ATPase gamma chain family. In terms of assembly, F-type ATPases have 2 components, CF(1) - the catalytic core - and CF(0) - the membrane proton channel. CF(1) has five subunits: alpha(3), beta(3), gamma(1), delta(1), epsilon(1). CF(0) has three main subunits: a, b and c.

Its subcellular location is the cell membrane. Produces ATP from ADP in the presence of a proton gradient across the membrane. The gamma chain is believed to be important in regulating ATPase activity and the flow of protons through the CF(0) complex. The protein is ATP synthase gamma chain of Lactococcus lactis subsp. lactis (strain IL1403) (Streptococcus lactis).